We begin with the raw amino-acid sequence, 286 residues long: uncharacterized protein (286 aa).

The next 2 membrane-spanning stretches (helical) occupy residues 201–221 (VIYS…LCET) and 231–251 (AIIL…YLMM).

It is found in the cell membrane. This is an uncharacterized protein from Methanocaldococcus jannaschii (strain ATCC 43067 / DSM 2661 / JAL-1 / JCM 10045 / NBRC 100440) (Methanococcus jannaschii).